We begin with the raw amino-acid sequence, 274 residues long: Shikimate dehydrogenase (NADP(+)) (274 aa).

Residues 15–17 (SKS) and threonine 62 contribute to the shikimate site. The active-site Proton acceptor is the lysine 66. Aspartate 78 lines the NADP(+) pocket. Shikimate is bound by residues asparagine 87 and aspartate 102. Residues 127-131 (GAGGA) and methionine 215 each bind NADP(+). Tyrosine 217 lines the shikimate pocket. Glycine 239 serves as a coordination point for NADP(+).

The protein belongs to the shikimate dehydrogenase family. As to quaternary structure, homodimer.

It carries out the reaction shikimate + NADP(+) = 3-dehydroshikimate + NADPH + H(+). Its pathway is metabolic intermediate biosynthesis; chorismate biosynthesis; chorismate from D-erythrose 4-phosphate and phosphoenolpyruvate: step 4/7. Its function is as follows. Involved in the biosynthesis of the chorismate, which leads to the biosynthesis of aromatic amino acids. Catalyzes the reversible NADPH linked reduction of 3-dehydroshikimate (DHSA) to yield shikimate (SA). The chain is Shikimate dehydrogenase (NADP(+)) from Dechloromonas aromatica (strain RCB).